The chain runs to 130 residues: Protein ApaG (130 aa).

The region spanning 3 to 127 (KAETRGISVI…FSLDVPHMRR (125 aa)) is the ApaG domain.

The sequence is that of Protein ApaG from Methylobacterium nodulans (strain LMG 21967 / CNCM I-2342 / ORS 2060).